A 274-amino-acid chain; its full sequence is MNSVPNELTKSQELFGQISKISHSKISISELITLLDIHYSELFTKNPWMKKEVRKLASEFVENDPNHLLSKQDACHLIEAFVNVSITSPTLLTSVDPVLYQQLEASSTNDISTVFEDESSSLPIILHPKFSSMQVRTVTSPKDAFVSAFEENKFHFAATESFFEMAFSKIDSCLTSVQSTKKDSIKSRLVERYIQNEESVKRPDKSPFDTMTEATLQSSSDKSENFTKTLLSNVLSTILSVQVIFATVIALIAISVFCFLHTSSKTTSSKTRPS.

Residues isoleucine 238–cysteine 258 traverse the membrane as a helical segment.

The protein localises to the membrane. This is an uncharacterized protein from Schizosaccharomyces pombe (strain 972 / ATCC 24843) (Fission yeast).